A 529-amino-acid polypeptide reads, in one-letter code: Peptide chain release factor 3 (529 aa).

The region spanning Ala11–Gln279 is the tr-type G domain. GTP is bound by residues Ser20–Thr27, Asp88–His92, and Asn142–Asp145.

This sequence belongs to the TRAFAC class translation factor GTPase superfamily. Classic translation factor GTPase family. PrfC subfamily.

The protein localises to the cytoplasm. Its function is as follows. Increases the formation of ribosomal termination complexes and stimulates activities of RF-1 and RF-2. It binds guanine nucleotides and has strong preference for UGA stop codons. It may interact directly with the ribosome. The stimulation of RF-1 and RF-2 is significantly reduced by GTP and GDP, but not by GMP. The protein is Peptide chain release factor 3 of Idiomarina loihiensis (strain ATCC BAA-735 / DSM 15497 / L2-TR).